Reading from the N-terminus, the 351-residue chain is tRNA pseudouridine synthase D (351 aa).

Residue Asp81 is the Nucleophile of the active site. The TRUD domain maps to 158–304; that stretch reads GVPNYFGSQR…MRHERRAIEL (147 aa).

The protein belongs to the pseudouridine synthase TruD family.

The enzyme catalyses uridine(13) in tRNA = pseudouridine(13) in tRNA. Functionally, responsible for synthesis of pseudouridine from uracil-13 in transfer RNAs. The chain is tRNA pseudouridine synthase D from Aliivibrio fischeri (strain MJ11) (Vibrio fischeri).